The sequence spans 570 residues: Sulfite reductase [NADPH] hemoprotein beta-component (570 aa).

Cys434, Cys440, Cys479, and Cys483 together coordinate [4Fe-4S] cluster. A siroheme-binding site is contributed by Cys483.

This sequence belongs to the nitrite and sulfite reductase 4Fe-4S domain family. As to quaternary structure, alpha(8)-beta(8). The alpha component is a flavoprotein, the beta component is a hemoprotein. The cofactor is siroheme. [4Fe-4S] cluster serves as cofactor.

The catalysed reaction is hydrogen sulfide + 3 NADP(+) + 3 H2O = sulfite + 3 NADPH + 4 H(+). The protein operates within sulfur metabolism; hydrogen sulfide biosynthesis; hydrogen sulfide from sulfite (NADPH route): step 1/1. In terms of biological role, component of the sulfite reductase complex that catalyzes the 6-electron reduction of sulfite to sulfide. This is one of several activities required for the biosynthesis of L-cysteine from sulfate. The polypeptide is Sulfite reductase [NADPH] hemoprotein beta-component (cysI) (Salmonella typhimurium (strain LT2 / SGSC1412 / ATCC 700720)).